The following is a 68-amino-acid chain: Large ribosomal subunit protein bL32 (68 aa).

It belongs to the bacterial ribosomal protein bL32 family.

The polypeptide is Large ribosomal subunit protein bL32 (Onion yellows phytoplasma (strain OY-M)).